A 498-amino-acid chain; its full sequence is Glycerol kinase (498 aa).

Position 12 (Thr12) interacts with ADP. Positions 12, 13, and 14 each coordinate ATP. Thr12 contacts sn-glycerol 3-phosphate. Residue Arg16 coordinates ADP. Positions 82, 83, 134, and 244 each coordinate sn-glycerol 3-phosphate. Glycerol is bound by residues Arg82, Glu83, Tyr134, Asp244, and Gln245. Residues Thr266 and Gly310 each coordinate ADP. Positions 266, 310, 314, and 411 each coordinate ATP. ADP-binding residues include Gly411 and Asn415.

This sequence belongs to the FGGY kinase family.

The enzyme catalyses glycerol + ATP = sn-glycerol 3-phosphate + ADP + H(+). Its pathway is polyol metabolism; glycerol degradation via glycerol kinase pathway; sn-glycerol 3-phosphate from glycerol: step 1/1. With respect to regulation, inhibited by fructose 1,6-bisphosphate (FBP). Functionally, key enzyme in the regulation of glycerol uptake and metabolism. Catalyzes the phosphorylation of glycerol to yield sn-glycerol 3-phosphate. This Chloroflexus aggregans (strain MD-66 / DSM 9485) protein is Glycerol kinase.